A 160-amino-acid polypeptide reads, in one-letter code: MLTHLDSQGRANMVDVTEKAVTSREATAEAVVRMRPETLQLIQDGGHPKGDVFAVARIAGIQAAKRTHELIPLCHPLLLTSVKLELQAEAPDAVRIRARCRLAGQTGVEMEALTAASVAALTIYDMCKAVDRGMVIEQVQLLEKLGGKSGHYRKEEEGQA.

Residues 73 to 75 (LCH) and 110 to 111 (ME) contribute to the substrate site. Asp125 is a catalytic residue.

It belongs to the MoaC family. Homohexamer; trimer of dimers.

The enzyme catalyses (8S)-3',8-cyclo-7,8-dihydroguanosine 5'-triphosphate = cyclic pyranopterin phosphate + diphosphate. It functions in the pathway cofactor biosynthesis; molybdopterin biosynthesis. In terms of biological role, catalyzes the conversion of (8S)-3',8-cyclo-7,8-dihydroguanosine 5'-triphosphate to cyclic pyranopterin monophosphate (cPMP). This is Cyclic pyranopterin monophosphate synthase from Pseudomonas aeruginosa (strain LESB58).